The following is a 434-amino-acid chain: N-lysine methyltransferase SMYD2-B (434 aa).

Positions 8-242 (PGIEQFASPG…PGQEIYTSYI (235 aa)) constitute an SET domain. 18–20 (KGR) serves as a coordination point for S-adenosyl-L-methionine. Zn(2+) is bound by residues C53, C56, C66, C69, C75, C79, H87, and C91. The segment at 53–91 (CEQCFTRKKGLAKCGKCKKAFYCNANCQKKNWPMHKLEC) adopts an MYND-type zinc-finger fold. S-adenosyl-L-methionine is bound by residues H138, 207–208 (NH), and 259–261 (YYF).

It belongs to the class V-like SAM-binding methyltransferase superfamily.

Its subcellular location is the cytoplasm. It is found in the cytosol. The protein resides in the nucleus. It catalyses the reaction L-lysyl(4)-[histone H3] + 3 S-adenosyl-L-methionine = N(6),N(6),N(6)-trimethyl-L-lysyl(4)-[histone H3] + 3 S-adenosyl-L-homocysteine + 3 H(+). The enzyme catalyses L-lysyl-[protein] + S-adenosyl-L-methionine = N(6)-methyl-L-lysyl-[protein] + S-adenosyl-L-homocysteine + H(+). Its function is as follows. Protein-lysine N-methyltransferase that methylates both histones and non-histone proteins, including p53/TP53 and RB1. Specifically trimethylates histone H3 'Lys-4' (H3K4me3) in vivo. The activity requires interaction with HSP90alpha. Shows even higher methyltransferase activity on p53/TP53. Monomethylates 'Lys-370' of p53/TP53, leading to decreased DNA-binding activity and subsequent transcriptional regulation activity of p53/TP53. Monomethylates RB1 at 'Lys-860'. In Danio rerio (Zebrafish), this protein is N-lysine methyltransferase SMYD2-B (smyd2b).